A 742-amino-acid polypeptide reads, in one-letter code: Conidiogenone synthase (742 aa).

The interval 1 to 332 (MGETIADVYA…SLCVPRYFKV (332 aa)) is terpene cyclase. Mg(2+) is bound at residue aspartate 97. Substrate-binding positions include aspartate 97, 190–193 (RIVD), asparagine 234, 238–242 (SWDKE), and 328–329 (RY). The DDXXD 1 motif lies at 97 to 101 (DDETD). Positions 234–242 (NDLFSWDKE) match the NSE/DTE motif. Residues 333 to 742 (ERNPYKDHLE…LRAMEEASQK (410 aa)) are prenyltransferase. Isopentenyl diphosphate is bound by residues lysine 414, arginine 417, and histidine 446. Positions 453 and 457 each coordinate Mg(2+). The DDXXD 2 signature appears at 453 to 457 (DDIQD). Arginine 462 provides a ligand contact to dimethylallyl diphosphate. Arginine 463 provides a ligand contact to isopentenyl diphosphate. The dimethylallyl diphosphate site is built by lysine 539, threonine 540, glutamine 575, asparagine 582, lysine 592, and lysine 602. The interval 701–724 (EAHKSDSAWKVNQRRAWKGSQKNG) is disordered.

It in the N-terminal section; belongs to the terpene synthase family. This sequence in the C-terminal section; belongs to the FPP/GGPP synthase family. Hexamer. Mg(2+) serves as cofactor.

The enzyme catalyses isopentenyl diphosphate + (2E,6E)-farnesyl diphosphate = (2E,6E,10E)-geranylgeranyl diphosphate + diphosphate. It functions in the pathway secondary metabolite biosynthesis; terpenoid biosynthesis. Bifunctional terpene synthase; part of the gene cluster that mediates the biosynthesis of conidiogenone, a diterpene known to induce the conidiation. The bifunctional terpene synthase PrDS converts isopentenyl diphosphate (IPP) and dimethylallyl diphosphate (DMAPP) into deoxyconidiogenol. The C-terminal prenyltransferase (PT) domain of PrDS catalyzes formation of GGPP, whereas the N-terminal terpene cyclase (TC) domain catalyzes the cyclization of GGPP into deoxyconidiogenol. The cytochrome P450 monooxygenase PrP450 then catalyzes two rounds of oxidation to furnish conidiogenone. The protein is Conidiogenone synthase of Penicillium roqueforti (strain FM164).